The following is a 770-amino-acid chain: DNA topoisomerase 1 (770 aa).

The region spanning 4–140 (FRIIIAEKAD…EIRRAKFSAL (137 aa)) is the Toprim domain. Mg(2+) is bound by residues Glu-10 and Asp-109. Residues 156–563 (NYSLADAADA…ESKKMLHEVL (408 aa)) form the Topo IA-type catalytic domain. Residues 194-199 (SAGRVQ) are interaction with DNA. The O-(5'-phospho-DNA)-tyrosine intermediate role is filled by Tyr-312. 3 consecutive C4-type zinc fingers follow at residues 611-638 (CEDP…CPVC), 673-700 (CPAD…YPKC), and 719-744 (CPYC…NMQC).

The protein belongs to the type IA topoisomerase family. As to quaternary structure, monomer. Mg(2+) serves as cofactor.

The enzyme catalyses ATP-independent breakage of single-stranded DNA, followed by passage and rejoining.. Its function is as follows. Releases the supercoiling and torsional tension of DNA, which is introduced during the DNA replication and transcription, by transiently cleaving and rejoining one strand of the DNA duplex. Introduces a single-strand break via transesterification at a target site in duplex DNA. The scissile phosphodiester is attacked by the catalytic tyrosine of the enzyme, resulting in the formation of a DNA-(5'-phosphotyrosyl)-enzyme intermediate and the expulsion of a 3'-OH DNA strand. The free DNA strand then undergoes passage around the unbroken strand, thus removing DNA supercoils. Finally, in the religation step, the DNA 3'-OH attacks the covalent intermediate to expel the active-site tyrosine and restore the DNA phosphodiester backbone. This chain is DNA topoisomerase 1, found in Thermoplasma acidophilum (strain ATCC 25905 / DSM 1728 / JCM 9062 / NBRC 15155 / AMRC-C165).